Consider the following 311-residue polypeptide: 4-diphosphocytidyl-2-C-methyl-D-erythritol kinase (311 aa).

Lys-16 is a catalytic residue. Residue 100-110 participates in ATP binding; it reads PIGAGLAGGSS. Asp-142 is an active-site residue.

The protein belongs to the GHMP kinase family. IspE subfamily.

The catalysed reaction is 4-CDP-2-C-methyl-D-erythritol + ATP = 4-CDP-2-C-methyl-D-erythritol 2-phosphate + ADP + H(+). The protein operates within isoprenoid biosynthesis; isopentenyl diphosphate biosynthesis via DXP pathway; isopentenyl diphosphate from 1-deoxy-D-xylulose 5-phosphate: step 3/6. Functionally, catalyzes the phosphorylation of the position 2 hydroxy group of 4-diphosphocytidyl-2C-methyl-D-erythritol. This chain is 4-diphosphocytidyl-2-C-methyl-D-erythritol kinase, found in Prochlorococcus marinus (strain MIT 9301).